The following is an 86-amino-acid chain: MANSKSAKKRATQAERRRQHNASRRSMMRTYMKKTIAAIEAGDKEAATAALAIATPLLDRMATKGLIHKNKAARHKARFTAAIKAL.

The span at 1–27 (MANSKSAKKRATQAERRRQHNASRRSM) shows a compositional bias: basic residues. The interval 1–28 (MANSKSAKKRATQAERRRQHNASRRSMM) is disordered.

It belongs to the bacterial ribosomal protein bS20 family.

Its function is as follows. Binds directly to 16S ribosomal RNA. In Aliivibrio salmonicida (strain LFI1238) (Vibrio salmonicida (strain LFI1238)), this protein is Small ribosomal subunit protein bS20.